The chain runs to 141 residues: Nucleoside diphosphate kinase (141 aa).

ATP is bound by residues lysine 11, phenylalanine 59, arginine 87, threonine 93, arginine 104, and asparagine 114. Histidine 117 acts as the Pros-phosphohistidine intermediate in catalysis.

The protein belongs to the NDK family. In terms of assembly, homotetramer. Mg(2+) is required as a cofactor.

The protein localises to the cytoplasm. It catalyses the reaction a 2'-deoxyribonucleoside 5'-diphosphate + ATP = a 2'-deoxyribonucleoside 5'-triphosphate + ADP. It carries out the reaction a ribonucleoside 5'-diphosphate + ATP = a ribonucleoside 5'-triphosphate + ADP. In terms of biological role, major role in the synthesis of nucleoside triphosphates other than ATP. The ATP gamma phosphate is transferred to the NDP beta phosphate via a ping-pong mechanism, using a phosphorylated active-site intermediate. This Leptothrix cholodnii (strain ATCC 51168 / LMG 8142 / SP-6) (Leptothrix discophora (strain SP-6)) protein is Nucleoside diphosphate kinase.